The sequence spans 722 residues: Zinc finger BED domain-containing protein RICESLEEPER 2 (722 aa).

The BED-type zinc-finger motif lies at 66–134 (RKKSLVWEHF…QEHKLALTPA (69 aa)). Zn(2+) is bound by residues C89, C92, H113, and H127. Residues 572–592 (VEQGDGNNAPASENGTQATAP) form a disordered region. Over residues 576 to 592 (DGNNAPASENGTQATAP) the composition is skewed to polar residues. Residues 617-702 (ELEQYLDESL…EALVCAKDWL (86 aa)) form an HATC (Hobo-Ac-Tam3) domain region.

Homodimer.

The protein resides in the nucleus. Functionally, transposase-like protein that is essential for plant growth and development. May regulate global gene expression by recruiting other cellular factors. This is Zinc finger BED domain-containing protein RICESLEEPER 2 from Oryza sativa subsp. japonica (Rice).